We begin with the raw amino-acid sequence, 166 residues long: MIERTALYAGSFDPLTNGHLDVLKASLAVADIVYAAIGIHPGKKPLFSFEERVQLIEDATKAEFGRDGARIKVVAFDGLVIDAARKQGASIMIRGLRDGTDLDYEMQMAGMNETMAPELQTVFLPASPSVRTITATLVRQIASMGGDIRPFVPAAVAGALTAKFAK.

Residue serine 11 coordinates substrate. ATP-binding positions include 11 to 12 (SF) and histidine 19. Lysine 43, valine 80, and arginine 94 together coordinate substrate. ATP contacts are provided by residues 95-97 (GLR), glutamate 105, and 130-136 (VRTITAT).

Belongs to the bacterial CoaD family. In terms of assembly, homohexamer. The cofactor is Mg(2+).

It is found in the cytoplasm. The catalysed reaction is (R)-4'-phosphopantetheine + ATP + H(+) = 3'-dephospho-CoA + diphosphate. It participates in cofactor biosynthesis; coenzyme A biosynthesis; CoA from (R)-pantothenate: step 4/5. Functionally, reversibly transfers an adenylyl group from ATP to 4'-phosphopantetheine, yielding dephospho-CoA (dPCoA) and pyrophosphate. The polypeptide is Phosphopantetheine adenylyltransferase (Mesorhizobium japonicum (strain LMG 29417 / CECT 9101 / MAFF 303099) (Mesorhizobium loti (strain MAFF 303099))).